The chain runs to 570 residues: Urease subunit alpha 1 (570 aa).

Residues 131 to 570 (GGIDTHVHFI…VPMAQRYFLF (440 aa)) enclose the Urease domain. Residues histidine 136, histidine 138, and lysine 219 each coordinate Ni(2+). N6-carboxylysine is present on lysine 219. Residue histidine 221 participates in substrate binding. 2 residues coordinate Ni(2+): histidine 248 and histidine 274. Histidine 322 serves as the catalytic Proton donor. Aspartate 362 is a binding site for Ni(2+).

It belongs to the metallo-dependent hydrolases superfamily. Urease alpha subunit family. In terms of assembly, heterotrimer of UreA (gamma), UreB (beta) and UreC (alpha) subunits. Three heterotrimers associate to form the active enzyme. It depends on Ni cation as a cofactor. Carboxylation allows a single lysine to coordinate two nickel ions.

It is found in the cytoplasm. The catalysed reaction is urea + 2 H2O + H(+) = hydrogencarbonate + 2 NH4(+). Its pathway is nitrogen metabolism; urea degradation; CO(2) and NH(3) from urea (urease route): step 1/1. In terms of biological role, disrupting the ure1 operon causes loss of urease activity, decreased resistance to low pH killing in vitro and decreased pathogen survival when inoculated in BALB/c mice by gavage. This Brucella suis biovar 1 (strain 1330) protein is Urease subunit alpha 1.